The primary structure comprises 295 residues: MQHYHFSHSLLAQQEKPYRFPCPAKLNLFLYINGKRQDGYHELQTLFQFVDFGDWLDIEVREDNEICLTPELPSLKNEDNLVYRAAKLLQQKTNCALGANLTLDKILPMGSGLGGGSSNAATALVALNYLWNTQLSTKQLAKLGLMLGADVPIFVHGHAAFAEGVGEKITYCEPKEKWYVVLKPNVSISTATVFSDPDLIRNTPKQSLEQLLNQKYANDCEKVVLNHYPEVEEILHRLLQYAPSRLTGTGACVFAEFNDEESAQLAFQTIPKNYFGFVAQGLNKSPLHNMLAKIS.

Residue lysine 25 is part of the active site. Position 108–118 (108–118 (PMGSGLGGGSS)) interacts with ATP. Aspartate 150 is a catalytic residue.

It belongs to the GHMP kinase family. IspE subfamily.

It carries out the reaction 4-CDP-2-C-methyl-D-erythritol + ATP = 4-CDP-2-C-methyl-D-erythritol 2-phosphate + ADP + H(+). It functions in the pathway isoprenoid biosynthesis; isopentenyl diphosphate biosynthesis via DXP pathway; isopentenyl diphosphate from 1-deoxy-D-xylulose 5-phosphate: step 3/6. Catalyzes the phosphorylation of the position 2 hydroxy group of 4-diphosphocytidyl-2C-methyl-D-erythritol. The protein is 4-diphosphocytidyl-2-C-methyl-D-erythritol kinase of Pasteurella multocida (strain Pm70).